The primary structure comprises 252 residues: Thiazole synthase (252 aa).

Catalysis depends on K91, which acts as the Schiff-base intermediate with DXP. Residues G152, 179-180, and 201-202 contribute to the 1-deoxy-D-xylulose 5-phosphate site; these read AG and NT.

The protein belongs to the ThiG family. In terms of assembly, homotetramer. Forms heterodimers with either ThiH or ThiS.

It localises to the cytoplasm. It catalyses the reaction [ThiS sulfur-carrier protein]-C-terminal-Gly-aminoethanethioate + 2-iminoacetate + 1-deoxy-D-xylulose 5-phosphate = [ThiS sulfur-carrier protein]-C-terminal Gly-Gly + 2-[(2R,5Z)-2-carboxy-4-methylthiazol-5(2H)-ylidene]ethyl phosphate + 2 H2O + H(+). It participates in cofactor biosynthesis; thiamine diphosphate biosynthesis. Functionally, catalyzes the rearrangement of 1-deoxy-D-xylulose 5-phosphate (DXP) to produce the thiazole phosphate moiety of thiamine. Sulfur is provided by the thiocarboxylate moiety of the carrier protein ThiS. In vitro, sulfur can be provided by H(2)S. In Erwinia pyrifoliae (strain DSM 12162 / Ep1/96), this protein is Thiazole synthase.